A 593-amino-acid polypeptide reads, in one-letter code: ETS-related transcription factor Elf-2 (593 aa).

The interval Met1–Ala34 is disordered. Ser107 bears the Phosphoserine mark. The disordered stretch occupies residues Val146 to Lys199. Positions Met171–Lys181 are enriched in basic residues. A Phosphothreonine modification is found at Thr182. Residues Thr182–Ser191 are compositionally biased toward polar residues. Phosphoserine occurs at positions 185 and 191. A DNA-binding region (ETS) is located at residues Thr208–Lys290. Residues Thr362–Ala383 are disordered. 2 positions are modified to phosphoserine: Ser363 and Ser372. The span at Ser370–Ala383 shows a compositional bias: low complexity. Phosphothreonine is present on Thr376. Ser432 is modified (phosphoserine). The residue at position 496 (Arg496) is an Omega-N-methylarginine. The residue at position 523 (Thr523) is a Phosphothreonine. A Glycyl lysine isopeptide (Lys-Gly) (interchain with G-Cter in SUMO2) cross-link involves residue Lys538.

The protein belongs to the ETS family. In terms of assembly, interacts with LIM domains of LMO2. Interacts via its N-terminal region with RUNX1. In terms of tissue distribution, expressed in all tissues examined. Highest levels in thymocytes and bone marrow.

The protein resides in the nucleus. In terms of biological role, probably transcriptionally activates the LYN and BLK promoters and acts synergistically with RUNX1 to transactivate the BLK promoter. This is ETS-related transcription factor Elf-2 from Mus musculus (Mouse).